Here is a 219-residue protein sequence, read N- to C-terminus: MRNTDTPIAVEGYPFIAGFAAATLLLALLGQFLHCGFFVPATLFFVLTVFTVFFFRNPERATPGDENTVVAPADGEVIFLGKVIEPHTNGEFEKISIFMSVFNVHVNRAPISGKVVDGFYTKGKFFDVRDERASFENEQQGLVLETAAGLRMVVVQVAGLIARRIVCYAKTGDSLSRGRRYGLIRFGSRLDIYLPLGTSIDVVMGQKTVAGETVLGILP.

The active-site Schiff-base intermediate with substrate; via pyruvic acid is Ser-188. A Pyruvic acid (Ser); by autocatalysis modification is found at Ser-188.

The protein belongs to the phosphatidylserine decarboxylase family. PSD-A subfamily. As to quaternary structure, heterodimer of a large membrane-associated beta subunit and a small pyruvoyl-containing alpha subunit. Pyruvate is required as a cofactor. In terms of processing, is synthesized initially as an inactive proenzyme. Formation of the active enzyme involves a self-maturation process in which the active site pyruvoyl group is generated from an internal serine residue via an autocatalytic post-translational modification. Two non-identical subunits are generated from the proenzyme in this reaction, and the pyruvate is formed at the N-terminus of the alpha chain, which is derived from the carboxyl end of the proenzyme. The post-translation cleavage follows an unusual pathway, termed non-hydrolytic serinolysis, in which the side chain hydroxyl group of the serine supplies its oxygen atom to form the C-terminus of the beta chain, while the remainder of the serine residue undergoes an oxidative deamination to produce ammonia and the pyruvoyl prosthetic group on the alpha chain.

It localises to the cell membrane. It carries out the reaction a 1,2-diacyl-sn-glycero-3-phospho-L-serine + H(+) = a 1,2-diacyl-sn-glycero-3-phosphoethanolamine + CO2. The protein operates within phospholipid metabolism; phosphatidylethanolamine biosynthesis; phosphatidylethanolamine from CDP-diacylglycerol: step 2/2. In terms of biological role, catalyzes the formation of phosphatidylethanolamine (PtdEtn) from phosphatidylserine (PtdSer). This is Phosphatidylserine decarboxylase proenzyme from Citrifermentans bemidjiense (strain ATCC BAA-1014 / DSM 16622 / JCM 12645 / Bem) (Geobacter bemidjiensis).